The primary structure comprises 178 residues: MTQMTSSDVPGMGRRQFMNLLTFGSVTGVALGSLYPVVKYFIPPRASGSGGGTSAKDELGNSVTASGWLANHSDGDRSLVQGLKGDPTYLIVEGDDAIGSYGINAICTHLGCVVPWNSGVNKFVCPCHGSQYNSTGKVVRGPAPLSLALANIAVENDNVFVSQWTETDFRTGEKPWWT.

The chain crosses the membrane as a helical span at residues 20–42 (LLTFGSVTGVALGSLYPVVKYFI). The 94-residue stretch at 68 to 161 (WLANHSDGDR…IAVENDNVFV (94 aa)) folds into the Rieske domain. [2Fe-2S] cluster contacts are provided by cysteine 107, histidine 109, cysteine 125, and histidine 128. A disulfide bridge links cysteine 112 with cysteine 127.

The protein belongs to the Rieske iron-sulfur protein family. As to quaternary structure, the 4 large subunits of the cytochrome b6-f complex are cytochrome b6, subunit IV (17 kDa polypeptide, PetD), cytochrome f and the Rieske protein, while the 4 small subunits are PetG, PetL, PetM and PetN. The complex functions as a dimer. It depends on [2Fe-2S] cluster as a cofactor.

It localises to the cellular thylakoid membrane. It carries out the reaction 2 oxidized [plastocyanin] + a plastoquinol + 2 H(+)(in) = 2 reduced [plastocyanin] + a plastoquinone + 4 H(+)(out). Component of the cytochrome b6-f complex, which mediates electron transfer between photosystem II (PSII) and photosystem I (PSI), cyclic electron flow around PSI, and state transitions. The sequence is that of Cytochrome b6-f complex iron-sulfur subunit from Prochlorococcus marinus (strain MIT 9303).